Consider the following 328-residue polypeptide: Phosphate acyltransferase (328 aa).

This sequence belongs to the PlsX family. Homodimer. Probably interacts with PlsY.

Its subcellular location is the cytoplasm. The enzyme catalyses a fatty acyl-[ACP] + phosphate = an acyl phosphate + holo-[ACP]. Its pathway is lipid metabolism; phospholipid metabolism. Catalyzes the reversible formation of acyl-phosphate (acyl-PO(4)) from acyl-[acyl-carrier-protein] (acyl-ACP). This enzyme utilizes acyl-ACP as fatty acyl donor, but not acyl-CoA. This chain is Phosphate acyltransferase, found in Staphylococcus aureus (strain MRSA252).